The primary structure comprises 230 residues: Uracil-DNA glycosylase (230 aa).

The active-site Proton acceptor is the aspartate 70.

The protein belongs to the uracil-DNA glycosylase (UDG) superfamily. UNG family.

The protein localises to the cytoplasm. The enzyme catalyses Hydrolyzes single-stranded DNA or mismatched double-stranded DNA and polynucleotides, releasing free uracil.. Excises uracil residues from the DNA which can arise as a result of misincorporation of dUMP residues by DNA polymerase or due to deamination of cytosine. The polypeptide is Uracil-DNA glycosylase (Pseudomonas putida (strain W619)).